We begin with the raw amino-acid sequence, 1887 residues long: Fatty acid synthase subunit alpha (1887 aa).

Lysine 37 is covalently cross-linked (Glycyl lysine isopeptide (Lys-Gly) (interchain with G-Cter in ubiquitin)). Serine 50 bears the Phosphoserine mark. Residues glutamate 96–proline 120 are disordered. A compositionally biased stretch (basic and acidic residues) spans alanine 98–alanine 108. Residues valine 145–alanine 220 enclose the Carrier domain. Serine 180 carries the O-(pantetheine 4'-phosphoryl)serine modification. Serine 523 is subject to Phosphoserine. Residues aspartate 675 to glycine 874 are beta-ketoacyl reductase. Serine 958 carries the phosphoserine modification. One can recognise a Ketosynthase family 3 (KS3) domain in the interval glutamine 1123–histidine 1657. The active-site For beta-ketoacyl synthase activity is the cysteine 1305. Serine 1440 carries the phosphoserine modification. Active-site for beta-ketoacyl synthase activity residues include histidine 1542 and histidine 1583. Residues aspartate 1772, valine 1773, and glutamate 1774 each coordinate Mg(2+). Acetyl-CoA-binding positions include aspartate 1772–glutamate 1774, tyrosine 1798, serine 1808, glutamate 1817–serine 1827, arginine 1841–lysine 1844, and isoleucine 1871–histidine 1873. Positions 1872 and 1873 each coordinate Mg(2+).

It belongs to the thiolase-like superfamily. Fungal fatty acid synthetase subunit alpha family. As to quaternary structure, [Alpha(6)beta(6)] hexamers of two multifunctional subunits (alpha and beta). In terms of processing, 4'-phosphopantetheine is transferred from CoA to a specific serine of the Acyl carrier domain by the C-terminal PPT domain. This modification is essential for activity because fatty acids are bound in thioester linkage to the sulfhydryl of the prosthetic group.

It carries out the reaction acetyl-CoA + n malonyl-CoA + 2n NADPH + 4n H(+) = a long-chain-acyl-CoA + n CoA + n CO2 + 2n NADP(+).. The catalysed reaction is a fatty acyl-[ACP] + malonyl-[ACP] + H(+) = a 3-oxoacyl-[ACP] + holo-[ACP] + CO2. It catalyses the reaction a (3R)-hydroxyacyl-[ACP] + NADP(+) = a 3-oxoacyl-[ACP] + NADPH + H(+). Its activity is regulated as follows. Inhibited by cerulenin by covalent binding to active site of the ketoacyl synthase (KS) region. In terms of biological role, fatty acid synthetase catalyzes the formation of long-chain fatty acids from acetyl-CoA, malonyl-CoA and NADPH. The alpha subunit contains domains for: acyl carrier protein, 3-oxoacyl-[acyl-carrier-protein] reductase, and 3-oxoacyl-[acyl-carrier-protein] synthase. This subunit coordinates the binding of the six beta subunits to the enzyme complex. In Saccharomyces cerevisiae (strain ATCC 204508 / S288c) (Baker's yeast), this protein is Fatty acid synthase subunit alpha (FAS2).